The sequence spans 481 residues: Tetratricopeptide repeat protein 29 (481 aa).

The segment covering 1–18 (MASVGPVKTKTVTLKELT) has biased composition (low complexity). The interval 1 to 53 (MASVGPVKTKTVTLKELTPPIPSPEKSACKGAKPDSNHMALVPVKPSQPGSGK) is disordered. 6 TPR repeats span residues 191 to 224 (CERCQLLADYFESERDCDEAAWHYDVALRIAMES), 231 to 264 (QEVRLSFGAFFERHKQLRKAIALFEEVYHLAMAL), 271 to 310 (VEANYRLIRTYLSLSAELKDTNPKEAISFLERALDMSQRV), 317 to 350 (ADSLHALGNIYESMGDFRRALEYQKRFFEVARAA), 357 to 390 (KRASLCVASMQERMNMTDEAVHSLQCALELSEKA), and 397 to 430 (YRATMQLGQAYDSSGDHEKALMSYRANFGAARKL).

In terms of assembly, interacts with TAX-1.

Its subcellular location is the cytoplasm. It localises to the cytoskeleton. The protein localises to the flagellum axoneme. In terms of biological role, axonemal protein which is implicated in axonemal and/or peri-axonemal structure assembly and regulates flagellum assembly and beating. This Trypanosoma brucei brucei (strain 927/4 GUTat10.1) protein is Tetratricopeptide repeat protein 29.